The sequence spans 437 residues: Enolase (437 aa).

A (2R)-2-phosphoglycerate-binding site is contributed by Q162. E204 acts as the Proton donor in catalysis. Residues D251, E297, and D324 each contribute to the Mg(2+) site. (2R)-2-phosphoglycerate-binding residues include K349, R378, S379, and K400. K349 functions as the Proton acceptor in the catalytic mechanism.

Belongs to the enolase family. The cofactor is Mg(2+).

It localises to the cytoplasm. Its subcellular location is the secreted. The protein localises to the cell surface. The enzyme catalyses (2R)-2-phosphoglycerate = phosphoenolpyruvate + H2O. It participates in carbohydrate degradation; glycolysis; pyruvate from D-glyceraldehyde 3-phosphate: step 4/5. In terms of biological role, catalyzes the reversible conversion of 2-phosphoglycerate (2-PG) into phosphoenolpyruvate (PEP). It is essential for the degradation of carbohydrates via glycolysis. The chain is Enolase from Chlorobaculum parvum (strain DSM 263 / NCIMB 8327) (Chlorobium vibrioforme subsp. thiosulfatophilum).